Here is a 92-residue protein sequence, read N- to C-terminus: Putative septation protein SpoVG (92 aa).

It belongs to the SpoVG family.

Functionally, could be involved in septation. The chain is Putative septation protein SpoVG from Thermoanaerobacter pseudethanolicus (strain ATCC 33223 / 39E) (Clostridium thermohydrosulfuricum).